We begin with the raw amino-acid sequence, 378 residues long: Putative zinc finger protein 302L (378 aa).

The segment at I3 to K25 adopts a C2H2-type; degenerate zinc-finger fold.

This sequence belongs to the IIV-6 302L family.

The protein is Putative zinc finger protein 302L of Invertebrate iridescent virus 6 (IIV-6).